Here is a 652-residue protein sequence, read N- to C-terminus: Acetyl-coenzyme A synthetase (652 aa).

CoA is bound by residues 189–192 (RGGK), T311, and N335. ATP-binding positions include 387 to 389 (GEP), 411 to 416 (DTWWQT), D500, and R515. Residue S523 participates in CoA binding. Position 526 (R526) interacts with ATP. The Mg(2+) site is built by V537, H539, and V542. R584 lines the CoA pocket. Residue K609 is modified to N6-acetyllysine.

This sequence belongs to the ATP-dependent AMP-binding enzyme family. The cofactor is Mg(2+). Acetylated. Deacetylation by the SIR2-homolog deacetylase activates the enzyme.

It carries out the reaction acetate + ATP + CoA = acetyl-CoA + AMP + diphosphate. Its function is as follows. Catalyzes the conversion of acetate into acetyl-CoA (AcCoA), an essential intermediate at the junction of anabolic and catabolic pathways. AcsA undergoes a two-step reaction. In the first half reaction, AcsA combines acetate with ATP to form acetyl-adenylate (AcAMP) intermediate. In the second half reaction, it can then transfer the acetyl group from AcAMP to the sulfhydryl group of CoA, forming the product AcCoA. The polypeptide is Acetyl-coenzyme A synthetase (Rhizobium rhizogenes (strain K84 / ATCC BAA-868) (Agrobacterium radiobacter)).